A 154-amino-acid chain; its full sequence is Prefoldin subunit 2 (154 aa).

Over residues 124–139 the composition is skewed to basic and acidic residues; it reads IRLMGEDEKPAAKENS. Residues 124 to 154 form a disordered region; it reads IRLMGEDEKPAAKENSEGAGAKASSAGVLVS. Residues 140 to 154 show a composition bias toward low complexity; it reads EGAGAKASSAGVLVS.

Belongs to the prefoldin subunit beta family. Heterohexamer of two PFD-alpha type and four PFD-beta type subunits. Component of the PAQosome complex which is responsible for the biogenesis of several protein complexes and which consists of R2TP complex members RUVBL1, RUVBL2, RPAP3 and PIH1D1, URI complex members PFDN2, PFDN6, PDRG1, UXT and URI1 as well as ASDURF, POLR2E and DNAAF10/WDR92. Interacts with URI1; the interaction is phosphorylation-dependent and occurs in a growth-dependent manner.

The protein localises to the nucleus. It is found in the cytoplasm. It localises to the mitochondrion. Its function is as follows. Binds specifically to cytosolic chaperonin (c-CPN) and transfers target proteins to it. Binds to nascent polypeptide chain and promotes folding in an environment in which there are many competing pathways for nonnative proteins. The chain is Prefoldin subunit 2 (PFDN2) from Homo sapiens (Human).